The sequence spans 257 residues: Phosphate import ATP-binding protein PstB (257 aa).

Positions 11–252 (IQVRDLNFYY…PAKKQTEDYI (242 aa)) constitute an ABC transporter domain. 43–50 (GPSGCGKS) is an ATP binding site.

It belongs to the ABC transporter superfamily. Phosphate importer (TC 3.A.1.7) family. The complex is composed of two ATP-binding proteins (PstB), two transmembrane proteins (PstC and PstA) and a solute-binding protein (PstS).

The protein resides in the cell inner membrane. It carries out the reaction phosphate(out) + ATP + H2O = ADP + 2 phosphate(in) + H(+). Part of the ABC transporter complex PstSACB involved in phosphate import. Responsible for energy coupling to the transport system. The polypeptide is Phosphate import ATP-binding protein PstB (Salmonella paratyphi A (strain ATCC 9150 / SARB42)).